The primary structure comprises 339 residues: Dihydroorotate dehydrogenase (quinone) (339 aa).

FMN contacts are provided by residues 62–66 (AGLDK) and Thr-86. Substrate is bound at residue Lys-66. 111 to 115 (NRMGF) provides a ligand contact to substrate. The FMN site is built by Asn-139 and Asn-172. Asn-172 serves as a coordination point for substrate. Ser-175 serves as the catalytic Nucleophile. Asn-177 lines the substrate pocket. FMN is bound by residues Lys-217 and Thr-245. Position 246–247 (246–247 (NT)) interacts with substrate. FMN is bound by residues Gly-268, Gly-297, and 318–319 (YS).

Belongs to the dihydroorotate dehydrogenase family. Type 2 subfamily. As to quaternary structure, monomer. FMN is required as a cofactor.

It is found in the cell membrane. It carries out the reaction (S)-dihydroorotate + a quinone = orotate + a quinol. It functions in the pathway pyrimidine metabolism; UMP biosynthesis via de novo pathway; orotate from (S)-dihydroorotate (quinone route): step 1/1. In terms of biological role, catalyzes the conversion of dihydroorotate to orotate with quinone as electron acceptor. The sequence is that of Dihydroorotate dehydrogenase (quinone) from Shewanella denitrificans (strain OS217 / ATCC BAA-1090 / DSM 15013).